Here is a 101-residue protein sequence, read N- to C-terminus: Small ribosomal subunit protein bS18c (101 aa).

The protein belongs to the bacterial ribosomal protein bS18 family. As to quaternary structure, part of the 30S ribosomal subunit.

The protein resides in the plastid. It is found in the chloroplast. In Lactuca sativa (Garden lettuce), this protein is Small ribosomal subunit protein bS18c.